A 491-amino-acid polypeptide reads, in one-letter code: Ubiquitin carboxyl-terminal hydrolase 30 (491 aa).

The Mitochondrial intermembrane portion of the chain corresponds to 1 to 31; sequence MPWCKQGTTDKLVREFLRTGAAARNKMMKNW. Residues 32–52 traverse the membrane as a helical segment; sequence GVIGGIAAAMAAGVYVLWGPI. Over 53–491 the chain is Cytoplasmic; sequence SDRRKKRKGM…MQRPGLRVEE (439 aa). The region spanning 64-482 is the USP domain; the sequence is PGLLNLGNTC…SAYLLFYERM (419 aa). Residue cysteine 73 is the Nucleophile of the active site. Residues 346-355 are compositionally biased toward polar residues; it reads AQSQQKTSRT. The disordered stretch occupies residues 346-365; it reads AQSQQKTSRTNKAKASADPK. The active-site Proton acceptor is the histidine 432.

The protein belongs to the peptidase C19 family.

It is found in the mitochondrion outer membrane. It carries out the reaction Thiol-dependent hydrolysis of ester, thioester, amide, peptide and isopeptide bonds formed by the C-terminal Gly of ubiquitin (a 76-residue protein attached to proteins as an intracellular targeting signal).. Its function is as follows. Deubiquitinating enzyme that acts as a key inhibitor of mitophagy by counteracting the action of parkin (PRKN). This is Ubiquitin carboxyl-terminal hydrolase 30 (usp30) from Danio rerio (Zebrafish).